A 151-amino-acid polypeptide reads, in one-letter code: MNLSSLKPVKGSTKTCKRVGRGQGSGCGGTSTRGHKGQKSRSGYSKKIGFEGGQMPIQRRLPKFGFKSINRVEYKAVNLSVIQSLIDTRCLAKIGIDDLVDAGIVSANRLVKILAGGIITSVVEVTAHAFSEKAEKAILKVGGTVIRTLKQ.

The interval 1 to 45 (MNLSSLKPVKGSTKTCKRVGRGQGSGCGGTSTRGHKGQKSRSGYS) is disordered. The segment covering 21–31 (RGQGSGCGGTS) has biased composition (gly residues).

This sequence belongs to the universal ribosomal protein uL15 family. As to quaternary structure, part of the 50S ribosomal subunit.

Binds to the 23S rRNA. This chain is Large ribosomal subunit protein uL15, found in Azobacteroides pseudotrichonymphae genomovar. CFP2.